We begin with the raw amino-acid sequence, 421 residues long: Probable pectate lyase C (421 aa).

An N-terminal signal peptide occupies residues 1–19; that stretch reads MQPLHTLLALLPLCRSTTA. 2 N-linked (GlcNAc...) asparagine glycosylation sites follow: Asn-164 and Asn-201. The active site involves Arg-204. The region spanning 257-292 is the EF-hand domain; sequence NENFHGYVENNYYDPDQDGTLNGNELGVSSSNYGGM. Positions 270, 272, 274, 276, and 281 each coordinate Ca(2+). The segment at 353–376 is disordered; sequence DFGGVGDLDGGETPTDTDGDGIPD. Acidic residues predominate over residues 367–376; that stretch reads TDTDGDGIPD.

Belongs to the polysaccharide lyase 1 family. Ca(2+) is required as a cofactor.

The protein localises to the secreted. The enzyme catalyses Eliminative cleavage of (1-&gt;4)-alpha-D-galacturonan to give oligosaccharides with 4-deoxy-alpha-D-galact-4-enuronosyl groups at their non-reducing ends.. Functionally, pectinolytic enzyme consist of four classes of enzymes: pectin lyase, polygalacturonase, pectin methylesterase and rhamnogalacturonase. Among pectinolytic enzymes, pectin lyase is the most important in depolymerization of pectin, since it cleaves internal glycosidic bonds of highly methylated pectins. Favors pectate, the anion, over pectin, the methyl ester. This chain is Probable pectate lyase C (plyC), found in Emericella nidulans (strain FGSC A4 / ATCC 38163 / CBS 112.46 / NRRL 194 / M139) (Aspergillus nidulans).